We begin with the raw amino-acid sequence, 178 residues long: Zinc finger protein ZAT11 (178 aa).

2 C2H2-type zinc fingers span residues 47–69 (FECK…RASH) and 94–116 (HKCS…MRRH).

As to expression, expressed in leaves.

It is found in the nucleus. Functionally, probable transcription factor that may be involved in stress responses. The polypeptide is Zinc finger protein ZAT11 (ZAT11) (Arabidopsis thaliana (Mouse-ear cress)).